The sequence spans 460 residues: Probable protein phosphatase 2C 38 (460 aa).

2 disordered regions span residues 1-30 (MVAVTGGRPPGLQDAPGAPPPAPAAEAVPS) and 83-111 (RPMRRRRRGGSSSSSSSPRDREPRDGRIA). Positions 100–109 (PRDREPRDGR) are enriched in basic and acidic residues. Residues 118–432 (AASLYTMRGN…DDCAVVCLFL (315 aa)) enclose the PPM-type phosphatase domain. Residues Asp154 and Gly155 each coordinate Mn(2+). Positions 192 to 219 (VTSSMTEGGGTERMDRDTETPLGTEENG) are disordered. Residues 201-210 (GTERMDRDTE) show a composition bias toward basic and acidic residues. Residues Asp377 and Asp423 each contribute to the Mn(2+) site.

This sequence belongs to the PP2C family. The cofactor is Mg(2+). Requires Mn(2+) as cofactor.

It catalyses the reaction O-phospho-L-seryl-[protein] + H2O = L-seryl-[protein] + phosphate. The enzyme catalyses O-phospho-L-threonyl-[protein] + H2O = L-threonyl-[protein] + phosphate. This chain is Probable protein phosphatase 2C 38, found in Oryza sativa subsp. japonica (Rice).